The primary structure comprises 34 residues: Photosystem II reaction center protein Psb30 (34 aa).

The helical transmembrane segment at 7 to 27 (VAQLISLFLILTSGPAIIVLI) threads the bilayer.

The protein belongs to the Psb30/Ycf12 family. PSII is composed of 1 copy each of membrane proteins PsbA, PsbB, PsbC, PsbD, PsbE, PsbF, PsbH, PsbI, PsbJ, PsbK, PsbL, PsbM, PsbT, PsbX, PsbY, PsbZ, Psb30/Ycf12, peripheral proteins of the oxygen-evolving complex and a large number of cofactors. It forms dimeric complexes.

The protein localises to the plastid. It localises to the chloroplast thylakoid membrane. Its function is as follows. A core subunit of photosystem II (PSII), probably helps stabilize the reaction center. This chain is Photosystem II reaction center protein Psb30, found in Rhodomonas salina (Cryptomonas salina).